Consider the following 248-residue polypeptide: 2,3-bisphosphoglycerate-dependent phosphoglycerate mutase (248 aa).

Substrate is bound by residues 8 to 15, 21 to 22, R60, 87 to 90, K98, 114 to 115, and 183 to 184; these read RHGESTWN, TG, ERHY, RR, and GN. H9 serves as the catalytic Tele-phosphohistidine intermediate. E87 functions as the Proton donor/acceptor in the catalytic mechanism.

This sequence belongs to the phosphoglycerate mutase family. BPG-dependent PGAM subfamily. In terms of assembly, homodimer.

The catalysed reaction is (2R)-2-phosphoglycerate = (2R)-3-phosphoglycerate. It functions in the pathway carbohydrate degradation; glycolysis; pyruvate from D-glyceraldehyde 3-phosphate: step 3/5. Catalyzes the interconversion of 2-phosphoglycerate and 3-phosphoglycerate. The polypeptide is 2,3-bisphosphoglycerate-dependent phosphoglycerate mutase (Burkholderia orbicola (strain MC0-3)).